The following is a 237-amino-acid chain: Large ribosomal subunit protein uL2 (237 aa).

The segment covering 1-11 has biased composition (polar residues); that stretch reads MGKRLISQNRG. Disordered stretches follow at residues 1-26 and 204-237; these read MGKR…KRKG and PYGG…SRRT. Composition is skewed to basic residues over residues 13–26 and 228–237; these read GTPK…KRKG and KVGHIASRRT.

It belongs to the universal ribosomal protein uL2 family. As to quaternary structure, part of the 50S ribosomal subunit. Forms a bridge to the 30S subunit in the 70S ribosome.

Functionally, one of the primary rRNA binding proteins. Required for association of the 30S and 50S subunits to form the 70S ribosome, for tRNA binding and peptide bond formation. It has been suggested to have peptidyltransferase activity; this is somewhat controversial. Makes several contacts with the 16S rRNA in the 70S ribosome. The sequence is that of Large ribosomal subunit protein uL2 from Methanococcus vannielii.